The chain runs to 24 residues: Protein YriA (24 aa).

The chain is Protein YriA from Escherichia coli (strain K12).